A 634-amino-acid polypeptide reads, in one-letter code: Chaperone protein HtpG (634 aa).

The tract at residues 1 to 343 (MTEAENRVTL…SDSLPLNVSR (343 aa)) is a; substrate-binding. Residues 344–560 (EILQENKQLE…SYGMSRTMER (217 aa)) are b. The interval 561–634 (IMKSAGQNIP…KLNGLLQSLL (74 aa)) is c.

This sequence belongs to the heat shock protein 90 family. Homodimer.

The protein resides in the cytoplasm. Its function is as follows. Molecular chaperone. Has ATPase activity. The polypeptide is Chaperone protein HtpG (Methylococcus capsulatus (strain ATCC 33009 / NCIMB 11132 / Bath)).